The sequence spans 438 residues: Ribosome biogenesis protein NOP53 (438 aa).

Disordered regions lie at residues 1–23 and 247–346; these read MVAGKRTGAAKGSRHNKKYWRKG and HPKY…RKKE. The segment covering 12–21 has biased composition (basic residues); the sequence is GSRHNKKYWR. 3 stretches are compositionally biased toward basic and acidic residues: residues 265–288, 297–318, and 325–346; these read KSMKTGGEAEPKSQRVECDRMTKE, QKLDKEEKRRLEEKAKEQDSHN, and LHKELDEEEKQRHEESEVRKKE.

The protein belongs to the NOP53 family.

The protein resides in the nucleus. It is found in the nucleolus. Its subcellular location is the nucleoplasm. May play a role in ribosome biogenesis, being required for integration of the 5S RNP into the ribosomal large subunit. The protein is Ribosome biogenesis protein NOP53 of Caenorhabditis elegans.